The following is a 433-amino-acid chain: Transcobalamin-1 (433 aa).

A signal peptide spans 1-23; the sequence is MRQSHQLPLVGLLLFSFIPSQLC. Positions 24 to 310 are globular N-terminal alpha domain; it reads EICEVSEENY…DINKDSSCVS (287 aa). 3 cysteine pairs are disulfide-bonded: C26–C265, C105–C308, and C155–C197. Residue 142-146 coordinates cyanocob(III)alamin; sequence TNYYQ. An N-linked (GlcNAc...) asparagine glycan is attached at N160. D186 contacts cyanocob(III)alamin. The N-linked (GlcNAc...) asparagine glycan is linked to N216. Cyanocob(III)alamin is bound by residues N240 and Q289. Positions 311 to 332 are flexible linker; sequence ASGNFNISADEPITVTPPDSQS. N-linked (GlcNAc...) asparagine glycans are attached at residues N316, N337, N343, N349, N354, and N369. A globular C-terminal beta domain region spans residues 333–433; that stretch reads YISVNYSVRI…ENLEVRWSKY (101 aa). Position 385–386 (385–386) interacts with cyanocob(III)alamin; it reads YI. C388 and C393 are disulfide-bonded. Cyanocob(III)alamin-binding positions include 402–404, L411, and Y433; that span reads WEL.

The protein belongs to the eukaryotic cobalamin transport proteins family. Post-translationally, contains about 30% carbohydrates. In terms of tissue distribution, produced by the salivary glands of the oral cavity, in response to ingestion of food. Major constituent of secondary granules in neutrophils.

It is found in the secreted. Binds vitamin B12 with femtomolar affinity and protects it from the acidic environment of the stomach. The polypeptide is Transcobalamin-1 (TCN1) (Homo sapiens (Human)).